Reading from the N-terminus, the 647-residue chain is RAF proto-oncogene serine/threonine-protein kinase (647 aa).

S43 is subject to Phosphoserine. Residues N56 to L131 form the RBD domain. Residues T138–C184 form a Phorbol-ester/DAG-type zinc finger. Disordered stretches follow at residues H236 to T269 and H284 to G334. Positions T239–T269 are enriched in polar residues. Residue S259 is modified to Phosphoserine. Position 268 is a phosphothreonine; by autocatalysis (T268). Residues E286–P297 are compositionally biased toward low complexity. The segment covering N298–K309 has biased composition (polar residues). The residue at position 338 (S338) is a Phosphoserine. Positions V349–L609 constitute a Protein kinase domain. ATP is bound by residues I355–V363 and K375. D468 functions as the Proton acceptor in the catalytic mechanism. A phosphoserine mark is found at S499 and S621.

Belongs to the protein kinase superfamily. TKL Ser/Thr protein kinase family. RAF subfamily. Post-translationally, phosphorylation at Ser-259 inactivates kinase activity. Dephosphorylation of Ser-259 by a complex containing protein phosphatase 1 relieves inactivation, leading to stimulate RAF1 activity. In terms of tissue distribution, isoform 1 was present in all tissues tested: skeletal muscle, intestine, brain, gizzard, heart, lung, kidney, bone marrow, spleen and bursa of Fabricius. Isoform 2 was only detected in brain, heart and skeletal muscle. In brain and heart isoform 1 is more abundant than isoform 2. In skeletal muscle isoform 2 is more abundant than isoform 1.

Its subcellular location is the cytoplasm. It is found in the cell membrane. It carries out the reaction L-seryl-[protein] + ATP = O-phospho-L-seryl-[protein] + ADP + H(+). The catalysed reaction is L-threonyl-[protein] + ATP = O-phospho-L-threonyl-[protein] + ADP + H(+). In terms of biological role, serine/threonine-protein kinase that acts as a regulatory link between the membrane-associated Ras GTPases and the MAPK/ERK cascade, and this critical regulatory link functions as a switch determining cell fate decisions. RAF1 activation initiates a mitogen-activated protein kinase (MAPK) cascade that comprises a sequential phosphorylation of the dual-specific MAPK kinases (MAP2K1/MEK1 and MAP2K2/MEK2) and the extracellular signal-regulated kinases (MAPK3/ERK1 and MAPK1/ERK2). In Gallus gallus (Chicken), this protein is RAF proto-oncogene serine/threonine-protein kinase (RAF1).